The primary structure comprises 261 residues: uncharacterized protein (261 aa).

This sequence belongs to the BtpA family.

This is an uncharacterized protein from Thermococcus kodakarensis (strain ATCC BAA-918 / JCM 12380 / KOD1) (Pyrococcus kodakaraensis (strain KOD1)).